We begin with the raw amino-acid sequence, 276 residues long: Bis(5'-nucleosyl)-tetraphosphatase, symmetrical (276 aa).

The protein belongs to the Ap4A hydrolase family.

It catalyses the reaction P(1),P(4)-bis(5'-adenosyl) tetraphosphate + H2O = 2 ADP + 2 H(+). Functionally, hydrolyzes diadenosine 5',5'''-P1,P4-tetraphosphate to yield ADP. The polypeptide is Bis(5'-nucleosyl)-tetraphosphatase, symmetrical (Dechloromonas aromatica (strain RCB)).